The primary structure comprises 1584 residues: Cilia- and flagella-associated protein 74 (1584 aa).

A coiled-coil region spans residues R300–Q379. Positions S692–M706 are enriched in polar residues. Residues S692 to E739 are disordered. The segment covering Q707–K717 has biased composition (basic and acidic residues).

The protein belongs to the CFAP74 family.

It is found in the cytoplasm. Its subcellular location is the cytoskeleton. It localises to the cilium axoneme. The protein resides in the flagellum axoneme. As part of the central apparatus of the cilium axoneme may play a role in cilium movement. May play an important role in sperm architecture and function. In Homo sapiens (Human), this protein is Cilia- and flagella-associated protein 74.